A 411-amino-acid polypeptide reads, in one-letter code: Efflux pump periplasmic linker BepF (411 aa).

Positions 118–196 form a coiled coil; that stretch reads FVLQKDALQA…SLEQAQINLG (79 aa).

Belongs to the membrane fusion protein (MFP) (TC 8.A.1) family. In terms of assembly, probably part of a tripartite efflux pump, which is composed of an outer membrane efflux protein, an inner membrane protein and a protein that expands the periplasmic space. Could form a tripartite pump with BepC and BepG.

The protein localises to the periplasm. Its function is as follows. May contribute to resistance to some drugs, such as deoxycholate, sodium dodecyl sulfate and nalidixic acid, in the absence of BepD and BepE. This is Efflux pump periplasmic linker BepF (bepF) from Brucella suis biovar 1 (strain 1330).